A 302-amino-acid polypeptide reads, in one-letter code: 4-hydroxy-tetrahydrodipicolinate synthase (302 aa).

A pyruvate-binding site is contributed by Thr55. Catalysis depends on Tyr144, which acts as the Proton donor/acceptor. Catalysis depends on Lys172, which acts as the Schiff-base intermediate with substrate. Val214 provides a ligand contact to pyruvate.

Belongs to the DapA family. Homotetramer; dimer of dimers.

It localises to the cytoplasm. The catalysed reaction is L-aspartate 4-semialdehyde + pyruvate = (2S,4S)-4-hydroxy-2,3,4,5-tetrahydrodipicolinate + H2O + H(+). Its pathway is amino-acid biosynthesis; L-lysine biosynthesis via DAP pathway; (S)-tetrahydrodipicolinate from L-aspartate: step 3/4. In terms of biological role, catalyzes the condensation of (S)-aspartate-beta-semialdehyde [(S)-ASA] and pyruvate to 4-hydroxy-tetrahydrodipicolinate (HTPA). This Synechococcus sp. (strain CC9902) protein is 4-hydroxy-tetrahydrodipicolinate synthase.